Consider the following 140-residue polypeptide: UPF0134 protein MPN_094 (140 aa).

The protein belongs to the UPF0134 family.

This is UPF0134 protein MPN_094 from Mycoplasma pneumoniae (strain ATCC 29342 / M129 / Subtype 1) (Mycoplasmoides pneumoniae).